The primary structure comprises 120 residues: MILQQPLERGPPSRDPRATTGVTRGLNASLSPREPLHKQFLSEENMATHFSRLSLHNDHPYCSPPVTFPEALPPLRSPCPELLLWRYPGSLIPEALRLLRLGDTPSPYYPASPAGDIVEL.

The tract at residues methionine 1–leucine 30 is disordered. The segment covering threonine 20–leucine 30 has biased composition (polar residues). The tract at residues aspartate 58–tyrosine 61 is interaction with HCFC1. Positions isoleucine 92 to leucine 101 match the Nuclear export signal motif.

As to quaternary structure, interacts with HCFC1.

Its subcellular location is the cytoplasm. The protein resides in the nucleus. Its function is as follows. Regulates HCFC1 activity by modulating its subcellular localization. Overexpression of HCFC1R1 leads to accumulation of HCFC1 in the cytoplasm. HCFC1R1-mediated export may provide the pool of cytoplasmic HCFC1 required for import of virion-derived VP16 into the nucleus. The chain is Host cell factor C1 regulator 1 (Hcfc1r1) from Mus musculus (Mouse).